Here is a 372-residue protein sequence, read N- to C-terminus: Lipoyl synthase, mitochondrial (372 aa).

A mitochondrion-targeting transit peptide spans 1–27; the sequence is MSLRCGDAARTLGPRVFGRYFCSPVRP. Cys-106, Cys-111, Cys-117, Cys-137, Cys-141, Cys-144, and Ser-352 together coordinate [4Fe-4S] cluster. The 220-residue stretch at 122–341 folds into the Radical SAM core domain; the sequence is EYATATATIM…EKVGNELGFH (220 aa).

It belongs to the radical SAM superfamily. Lipoyl synthase family. The cofactor is [4Fe-4S] cluster.

The protein resides in the mitochondrion. The enzyme catalyses [[Fe-S] cluster scaffold protein carrying a second [4Fe-4S](2+) cluster] + N(6)-octanoyl-L-lysyl-[protein] + 2 oxidized [2Fe-2S]-[ferredoxin] + 2 S-adenosyl-L-methionine + 4 H(+) = [[Fe-S] cluster scaffold protein] + N(6)-[(R)-dihydrolipoyl]-L-lysyl-[protein] + 4 Fe(3+) + 2 hydrogen sulfide + 2 5'-deoxyadenosine + 2 L-methionine + 2 reduced [2Fe-2S]-[ferredoxin]. The protein operates within protein modification; protein lipoylation via endogenous pathway; protein N(6)-(lipoyl)lysine from octanoyl-[acyl-carrier-protein]: step 2/2. Its function is as follows. Catalyzes the radical-mediated insertion of two sulfur atoms into the C-6 and C-8 positions of the octanoyl moiety bound to the lipoyl domains of lipoate-dependent enzymes, thereby converting the octanoylated domains into lipoylated derivatives. The sequence is that of Lipoyl synthase, mitochondrial from Homo sapiens (Human).